We begin with the raw amino-acid sequence, 199 residues long: Inactive glutathione S-transferase D3 (199 aa).

The 64-residue stretch at 1–64 (MVGKALGLEF…YLVEKYGKDD (64 aa)) folds into the GST N-terminal domain. Glutathione is bound by residues 34 to 36 (HSI) and 48 to 50 (ESR). In terms of domain architecture, GST C-terminal spans 70–199 (DIQKQAVINQ…RIEEKQNAAK (130 aa)).

Belongs to the GST superfamily. Delta family. As to quaternary structure, homodimer.

Has no glutathione S-transferase activity. The protein is Inactive glutathione S-transferase D3 of Drosophila melanogaster (Fruit fly).